We begin with the raw amino-acid sequence, 154 residues long: Endoribonuclease YbeY (154 aa).

Zn(2+) is bound by residues histidine 120, histidine 124, and histidine 130.

It belongs to the endoribonuclease YbeY family. It depends on Zn(2+) as a cofactor.

The protein resides in the cytoplasm. In terms of biological role, single strand-specific metallo-endoribonuclease involved in late-stage 70S ribosome quality control and in maturation of the 3' terminus of the 16S rRNA. This is Endoribonuclease YbeY from Leptospira biflexa serovar Patoc (strain Patoc 1 / Ames).